Here is a 260-residue protein sequence, read N- to C-terminus: 1-(5-phosphoribosyl)-5-[(5-phosphoribosylamino)methylideneamino] imidazole-4-carboxamide isomerase (260 aa).

D8 serves as the catalytic Proton acceptor. D130 acts as the Proton donor in catalysis.

Belongs to the HisA/HisF family.

Its subcellular location is the cytoplasm. It carries out the reaction 1-(5-phospho-beta-D-ribosyl)-5-[(5-phospho-beta-D-ribosylamino)methylideneamino]imidazole-4-carboxamide = 5-[(5-phospho-1-deoxy-D-ribulos-1-ylimino)methylamino]-1-(5-phospho-beta-D-ribosyl)imidazole-4-carboxamide. The protein operates within amino-acid biosynthesis; L-histidine biosynthesis; L-histidine from 5-phospho-alpha-D-ribose 1-diphosphate: step 4/9. The sequence is that of 1-(5-phosphoribosyl)-5-[(5-phosphoribosylamino)methylideneamino] imidazole-4-carboxamide isomerase from Chlorobium phaeobacteroides (strain BS1).